We begin with the raw amino-acid sequence, 1643 residues long: DNA-directed RNA polymerase subunit beta' (1643 aa).

Residues cysteine 64, cysteine 66, cysteine 79, and cysteine 82 each contribute to the Zn(2+) site. Aspartate 684, aspartate 686, and aspartate 688 together coordinate Mg(2+). Zn(2+)-binding residues include cysteine 1046, cysteine 1239, cysteine 1246, and cysteine 1249.

Belongs to the RNA polymerase beta' chain family. As to quaternary structure, the RNAP catalytic core consists of 2 alpha, 1 beta, 1 beta' and 1 omega subunit. When a sigma factor is associated with the core the holoenzyme is formed, which can initiate transcription. Requires Mg(2+) as cofactor. Zn(2+) is required as a cofactor.

It catalyses the reaction RNA(n) + a ribonucleoside 5'-triphosphate = RNA(n+1) + diphosphate. Functionally, DNA-dependent RNA polymerase catalyzes the transcription of DNA into RNA using the four ribonucleoside triphosphates as substrates. This Petrotoga mobilis (strain DSM 10674 / SJ95) protein is DNA-directed RNA polymerase subunit beta'.